A 233-amino-acid polypeptide reads, in one-letter code: Nuclear speckle RNA-binding protein A (233 aa).

3 disordered regions span residues M1–T54, V68–V92, and F214–R233. A compositionally biased stretch (gly residues) spans G71–N91. Positions N136–K222 constitute an RRM domain.

In terms of tissue distribution, expressed in root meristems, lateral root primordia and root vascular tissues.

It localises to the nucleus speckle. Its function is as follows. Alternative splicing (AS) regulator that binds to specific mRNAs and modulates auxin effects on the transcriptome. Displaced from its targets upon binding to AS competitor long non-coding RNA (ASCO-RNA). The polypeptide is Nuclear speckle RNA-binding protein A (Arabidopsis thaliana (Mouse-ear cress)).